The primary structure comprises 525 residues: RNA-directed RNA polymerase (525 aa).

Residues 72 to 272 (LVYADNIYIV…DKERLFCSAA (201 aa)) enclose the RdRp catalytic domain.

Interacts with VP3 in the cytoplasm. Post-translationally, may exist in multiple phosphorylated forms.

It is found in the virion. The catalysed reaction is RNA(n) + a ribonucleoside 5'-triphosphate = RNA(n+1) + diphosphate. Functionally, RNA-dependent RNA polymerase which is found both free and covalently attached to the genomic RNA. May also contain guanylyl and methyl transferase activities. The protein is RNA-directed RNA polymerase (VP1) of Gallus gallus (Chicken).